The primary structure comprises 526 residues: MIAMPLHRALLKNFLGYAPDWYKLTIFGFLLINPLLFYFVSPFWAGWLLVVEFIFTLGMALKCYPLQPGGLLALQAILIGMTSPQQVWHEVTGNIEVLMLLVFMVAGIYFMKQLLLFVFTKLLLRIHSKPLLSLAFCMAAAFLSAFLDALTVIAVIISVAIGFYGIYHRFASQQGEDEADISDDSALNGEEHHRTLDQFRAFLRSLMMHAGVGTALGGVMTMVGEPQNLIIAKSAGWDFVDFFLRMSPVTVPVFICGILTCVLVERFKLFGYGVNLPDNVRRVLEDYDRDMTEKRTQQDKVRLLVQAVIGVWLIIALAFHLAEVGLIGLSVIIMATTFCGVTEEHAIGKAFQDAMPFTALLTVFFAIVAVIIDQQLFSPIIHYVLQSSDSAQLTQFYLFNGLLSSISDNVFVGSVYINEARNAFESGKISLPQFELLAVAINTGTNLPSVATPNGQAAFLFLLTSSLAPLIRLSYGRMVIMALPYTIVMTLVGLLCVEFTLVPFTDFLMNNHWISLPNLTISGSHA.

13 consecutive transmembrane segments (helical) span residues 14–34 (FLGY…LINP), 35–55 (LLFY…EFIF), 99–119 (MLLV…LFVF), 122–142 (LLLR…AAAF), 146–166 (FLDA…FYGI), 206–226 (LMMH…VGEP), 239–259 (FVDF…CGIL), 307–327 (AVIG…VGLI), 328–348 (GLSV…HAIG), 357–377 (FTAL…QQLF), 397–417 (YLFN…SVYI), 451–471 (ATPN…APLI), and 479–499 (VIMA…CVEF).

The protein belongs to the NhaB Na(+)/H(+) (TC 2.A.34) antiporter family.

It is found in the cell inner membrane. The catalysed reaction is 2 Na(+)(in) + 3 H(+)(out) = 2 Na(+)(out) + 3 H(+)(in). Its function is as follows. Na(+)/H(+) antiporter that extrudes sodium in exchange for external protons. The protein is Na(+)/H(+) antiporter NhaB of Pectobacterium atrosepticum (strain SCRI 1043 / ATCC BAA-672) (Erwinia carotovora subsp. atroseptica).